The primary structure comprises 296 residues: Lipoyl synthase (296 aa).

Residues Cys37, Cys42, Cys48, Cys63, Cys67, Cys70, and Ser276 each coordinate [4Fe-4S] cluster. The Radical SAM core domain maps to 49 to 265; sequence WSKKHTTVMI…ERVAKTKGFL (217 aa).

Belongs to the radical SAM superfamily. Lipoyl synthase family. Requires [4Fe-4S] cluster as cofactor.

It localises to the cytoplasm. The enzyme catalyses [[Fe-S] cluster scaffold protein carrying a second [4Fe-4S](2+) cluster] + N(6)-octanoyl-L-lysyl-[protein] + 2 oxidized [2Fe-2S]-[ferredoxin] + 2 S-adenosyl-L-methionine + 4 H(+) = [[Fe-S] cluster scaffold protein] + N(6)-[(R)-dihydrolipoyl]-L-lysyl-[protein] + 4 Fe(3+) + 2 hydrogen sulfide + 2 5'-deoxyadenosine + 2 L-methionine + 2 reduced [2Fe-2S]-[ferredoxin]. It functions in the pathway protein modification; protein lipoylation via endogenous pathway; protein N(6)-(lipoyl)lysine from octanoyl-[acyl-carrier-protein]: step 2/2. In terms of biological role, catalyzes the radical-mediated insertion of two sulfur atoms into the C-6 and C-8 positions of the octanoyl moiety bound to the lipoyl domains of lipoate-dependent enzymes, thereby converting the octanoylated domains into lipoylated derivatives. In Rickettsia peacockii (strain Rustic), this protein is Lipoyl synthase.